The following is a 179-amino-acid chain: Ribosomal-protein-serine acetyltransferase (179 aa).

Residues 11–172 enclose the N-acetyltransferase domain; sequence LELHAVAENH…NDAYDDVNLY (162 aa).

The protein belongs to the acetyltransferase family. RimL subfamily.

The protein resides in the cytoplasm. The enzyme catalyses N-terminal L-seryl-[ribosomal protein bL12] + acetyl-CoA = N-terminal N(alpha)-acetyl-L-seryl-[ribosomal protein bL12] + CoA + H(+). Its function is as follows. This enzyme acetylates the N-terminal serine of ribosomal protein bL12, converting it into the acetylated form of bL12 known as bL7. The chain is Ribosomal-protein-serine acetyltransferase from Escherichia coli (strain K12).